The sequence spans 428 residues: Trigger factor (428 aa).

In terms of domain architecture, PPIase FKBP-type spans 166-250 (GDIVTFDFKG…IKNIKEKILP (85 aa)).

The protein belongs to the FKBP-type PPIase family. Tig subfamily.

The protein resides in the cytoplasm. It carries out the reaction [protein]-peptidylproline (omega=180) = [protein]-peptidylproline (omega=0). Its function is as follows. Involved in protein export. Acts as a chaperone by maintaining the newly synthesized protein in an open conformation. Functions as a peptidyl-prolyl cis-trans isomerase. The protein is Trigger factor of Mycoplasma mycoides subsp. mycoides SC (strain CCUG 32753 / NCTC 10114 / PG1).